The following is a 303-amino-acid chain: 1D-myo-inositol 2-acetamido-2-deoxy-alpha-D-glucopyranoside deacetylase 1 (303 aa).

The Zn(2+) site is built by His15, Asp18, and His157.

The protein belongs to the MshB deacetylase family. Zn(2+) serves as cofactor.

The enzyme catalyses 1D-myo-inositol 2-acetamido-2-deoxy-alpha-D-glucopyranoside + H2O = 1D-myo-inositol 2-amino-2-deoxy-alpha-D-glucopyranoside + acetate. Its function is as follows. Catalyzes the deacetylation of 1D-myo-inositol 2-acetamido-2-deoxy-alpha-D-glucopyranoside (GlcNAc-Ins) in the mycothiol biosynthesis pathway. This Saccharopolyspora erythraea (strain ATCC 11635 / DSM 40517 / JCM 4748 / NBRC 13426 / NCIMB 8594 / NRRL 2338) protein is 1D-myo-inositol 2-acetamido-2-deoxy-alpha-D-glucopyranoside deacetylase 1.